Consider the following 407-residue polypeptide: UDP-N-acetylglucosamine--N-acetylmuramyl-(pentapeptide) pyrophosphoryl-undecaprenol N-acetylglucosamine transferase (407 aa).

Residues 1 to 21 (MNNSVREPTRGRRGSPPVADA) are disordered. UDP-N-acetyl-alpha-D-glucosamine-binding positions include 38-40 (TAG), Asn-157, Ser-228, and Gln-324.

This sequence belongs to the glycosyltransferase 28 family. MurG subfamily.

The protein localises to the cell membrane. The catalysed reaction is di-trans,octa-cis-undecaprenyl diphospho-N-acetyl-alpha-D-muramoyl-L-alanyl-D-glutamyl-meso-2,6-diaminopimeloyl-D-alanyl-D-alanine + UDP-N-acetyl-alpha-D-glucosamine = di-trans,octa-cis-undecaprenyl diphospho-[N-acetyl-alpha-D-glucosaminyl-(1-&gt;4)]-N-acetyl-alpha-D-muramoyl-L-alanyl-D-glutamyl-meso-2,6-diaminopimeloyl-D-alanyl-D-alanine + UDP + H(+). It participates in cell wall biogenesis; peptidoglycan biosynthesis. Cell wall formation. Catalyzes the transfer of a GlcNAc subunit on undecaprenyl-pyrophosphoryl-MurNAc-pentapeptide (lipid intermediate I) to form undecaprenyl-pyrophosphoryl-MurNAc-(pentapeptide)GlcNAc (lipid intermediate II). The sequence is that of UDP-N-acetylglucosamine--N-acetylmuramyl-(pentapeptide) pyrophosphoryl-undecaprenol N-acetylglucosamine transferase from Mycobacterium leprae (strain TN).